The chain runs to 361 residues: DNA replication and repair protein RecF (361 aa).

30 to 37 (GDNAQGKT) lines the ATP pocket.

Belongs to the RecF family.

The protein resides in the cytoplasm. In terms of biological role, the RecF protein is involved in DNA metabolism; it is required for DNA replication and normal SOS inducibility. RecF binds preferentially to single-stranded, linear DNA. It also seems to bind ATP. This Clostridium perfringens (strain ATCC 13124 / DSM 756 / JCM 1290 / NCIMB 6125 / NCTC 8237 / Type A) protein is DNA replication and repair protein RecF.